Reading from the N-terminus, the 378-residue chain is MTETVAIIVAGGRGQRAGAERPKQWQMLLGKRVIDWSIAAFVDHPQISQVVIVAGDELGDCSAEPKIIQAKPGNTRTQSVLSGLAAATISEDATVVIHDAARPGIDAATISSLIARLQDPSVSGAAPAMPVADALKTNSGQSWTNVDRTGLVRVQTPQAFRLGEIRAALSAAGPDLVDDLTAIEAAGGRVEIVSGSARLTKITYPEDFDMLARLLSPTGAPRIGKGYDVHEFEAGDHVTLCGVAIPHIAKLKGHSDADAAWHALTDAILGAVALGDIGDHFPPSDPQWKGADSGLFLKEAQRLAEAKGYVIANCDITVICEAPKVKPHREAMRARTAELLGLPLDAVSVKATTTEGLGFTGRREGIAAEAVALLMPKG.

Positions Met1–Arg222 are 2-C-methyl-D-erythritol 4-phosphate cytidylyltransferase. Residues Arg222–Gly378 are 2-C-methyl-D-erythritol 2,4-cyclodiphosphate synthase. Residues Asp228 and His230 each contribute to the a divalent metal cation site. 4-CDP-2-C-methyl-D-erythritol 2-phosphate contacts are provided by residues Asp228–His230 and His254–Ser255. His262 contributes to the a divalent metal cation binding site. Residues Asp276–Gly278, Thr352–Glu355, Phe359, and Arg362 contribute to the 4-CDP-2-C-methyl-D-erythritol 2-phosphate site.

This sequence in the N-terminal section; belongs to the IspD/TarI cytidylyltransferase family. IspD subfamily. It in the C-terminal section; belongs to the IspF family. A divalent metal cation is required as a cofactor.

It catalyses the reaction 2-C-methyl-D-erythritol 4-phosphate + CTP + H(+) = 4-CDP-2-C-methyl-D-erythritol + diphosphate. It carries out the reaction 4-CDP-2-C-methyl-D-erythritol 2-phosphate = 2-C-methyl-D-erythritol 2,4-cyclic diphosphate + CMP. Its pathway is isoprenoid biosynthesis; isopentenyl diphosphate biosynthesis via DXP pathway; isopentenyl diphosphate from 1-deoxy-D-xylulose 5-phosphate: step 2/6. The protein operates within isoprenoid biosynthesis; isopentenyl diphosphate biosynthesis via DXP pathway; isopentenyl diphosphate from 1-deoxy-D-xylulose 5-phosphate: step 4/6. Bifunctional enzyme that catalyzes the formation of 4-diphosphocytidyl-2-C-methyl-D-erythritol from CTP and 2-C-methyl-D-erythritol 4-phosphate (MEP) (IspD), and catalyzes the conversion of 4-diphosphocytidyl-2-C-methyl-D-erythritol 2-phosphate (CDP-ME2P) to 2-C-methyl-D-erythritol 2,4-cyclodiphosphate (ME-CPP) with a corresponding release of cytidine 5-monophosphate (CMP) (IspF). The polypeptide is Bifunctional enzyme IspD/IspF (Hyphomonas neptunium (strain ATCC 15444)).